Reading from the N-terminus, the 90-residue chain is Small ribosomal subunit protein uS15 (90 aa).

The protein belongs to the universal ribosomal protein uS15 family. In terms of assembly, part of the 30S ribosomal subunit. Forms a bridge to the 50S subunit in the 70S ribosome, contacting the 23S rRNA.

Functionally, one of the primary rRNA binding proteins, it binds directly to 16S rRNA where it helps nucleate assembly of the platform of the 30S subunit by binding and bridging several RNA helices of the 16S rRNA. Its function is as follows. Forms an intersubunit bridge (bridge B4) with the 23S rRNA of the 50S subunit in the ribosome. In Helicobacter pylori (strain HPAG1), this protein is Small ribosomal subunit protein uS15.